The chain runs to 211 residues: Molybdenum cofactor guanylyltransferase (211 aa).

Residues 12–14 (LAG), Lys25, Asn55, Asp73, and Asp103 each bind GTP. Position 103 (Asp103) interacts with Mg(2+).

The protein belongs to the MobA family. As to quaternary structure, monomer. Requires Mg(2+) as cofactor.

It is found in the cytoplasm. The enzyme catalyses Mo-molybdopterin + GTP + H(+) = Mo-molybdopterin guanine dinucleotide + diphosphate. Transfers a GMP moiety from GTP to Mo-molybdopterin (Mo-MPT) cofactor (Moco or molybdenum cofactor) to form Mo-molybdopterin guanine dinucleotide (Mo-MGD) cofactor. This is Molybdenum cofactor guanylyltransferase from Albidiferax ferrireducens (strain ATCC BAA-621 / DSM 15236 / T118) (Rhodoferax ferrireducens).